Consider the following 267-residue polypeptide: Zein-alpha Z4 (267 aa).

Residues 1–21 (MAAKIFCLIMLLGLSASAATA) form the signal peptide.

It belongs to the zein family.

In terms of biological role, zeins are major seed storage proteins. This is Zein-alpha Z4 from Zea mays (Maize).